The primary structure comprises 70 residues: Protease inhibitor HPI (70 aa).

Ala2 is modified (N-acetylalanine). Residue Cys5 is modified to S-glutathionyl cysteine; alternate.

Belongs to the protease inhibitor I13 (potato type I serine protease inhibitor) family. Monomer and homodimer; disulfide-linked. Occurs in 3 forms that differ in the modification of Cys-5, HPI-1 forms a homodimer through a disulfide bond, HPI-2a is modified by glutathionylation, and HPI-2b is covalently modified by addition of an unidentified adduct but not by a disulfide linkage.

Inhibitor of serine proteases, strongly inhibits subtilisin A and weakly inhibits trypsin. Does not inhibit chymotrypsin, papain, pepsin, pronase E, protease type XIII and thermolysin. HPI-1 inhibits subtilisin A with an Ki of 0.21 nM. HPI-2a inhibits subtilisin A with an Ki of 0.08 nM. HPI-2b inhibits subtilisin A with an Ki of 0.1 nM. In Hevea brasiliensis (Para rubber tree), this protein is Protease inhibitor HPI.